We begin with the raw amino-acid sequence, 212 residues long: Large ribosomal subunit protein bL25 (212 aa).

Positions 181-212 (LSEPKEEVIEEDVEEVSADVPTVSETEEEDAE) are disordered. Acidic residues predominate over residues 188 to 197 (VIEEDVEEVS).

This sequence belongs to the bacterial ribosomal protein bL25 family. CTC subfamily. Part of the 50S ribosomal subunit; part of the 5S rRNA/L5/L18/L25 subcomplex. Contacts the 5S rRNA. Binds to the 5S rRNA independently of L5 and L18.

Functionally, this is one of the proteins that binds to the 5S RNA in the ribosome where it forms part of the central protuberance. This Finegoldia magna (strain ATCC 29328 / DSM 20472 / WAL 2508) (Peptostreptococcus magnus) protein is Large ribosomal subunit protein bL25.